A 206-amino-acid polypeptide reads, in one-letter code: Large ribosomal subunit protein uL4 (206 aa).

This sequence belongs to the universal ribosomal protein uL4 family. In terms of assembly, part of the 50S ribosomal subunit.

In terms of biological role, one of the primary rRNA binding proteins, this protein initially binds near the 5'-end of the 23S rRNA. It is important during the early stages of 50S assembly. It makes multiple contacts with different domains of the 23S rRNA in the assembled 50S subunit and ribosome. Functionally, forms part of the polypeptide exit tunnel. The protein is Large ribosomal subunit protein uL4 of Bradyrhizobium diazoefficiens (strain JCM 10833 / BCRC 13528 / IAM 13628 / NBRC 14792 / USDA 110).